The sequence spans 204 residues: Inactive ribonuclease-like protein 9 (204 aa).

Residues 1-26 (MMRTLITTHPLLLLLLLQQLLQPVQL) form the signal peptide. 3 disulfide bridges follow: Cys-97–Cys-152, Cys-115–Cys-167, and Cys-122–Cys-129. Asn-130 and Asn-142 each carry an N-linked (GlcNAc...) asparagine glycan.

It belongs to the pancreatic ribonuclease family.

The protein localises to the secreted. Functionally, does not exhibit any ribonuclease activity. This Chlorocebus pygerythrus (Vervet monkey) protein is Inactive ribonuclease-like protein 9 (RNASE9).